A 486-amino-acid polypeptide reads, in one-letter code: Malonate-semialdehyde dehydrogenase 1 (486 aa).

NAD(+) contacts are provided by Phe154, Lys178, Glu181, Arg182, and Ser231. The active-site Nucleophile is the Cys286. NAD(+) is bound at residue Glu386.

The protein belongs to the aldehyde dehydrogenase family. IolA subfamily. In terms of assembly, homotetramer.

It catalyses the reaction 3-oxopropanoate + NAD(+) + CoA + H2O = hydrogencarbonate + acetyl-CoA + NADH + H(+). The catalysed reaction is 2-methyl-3-oxopropanoate + NAD(+) + CoA + H2O = propanoyl-CoA + hydrogencarbonate + NADH + H(+). Its pathway is polyol metabolism; myo-inositol degradation into acetyl-CoA; acetyl-CoA from myo-inositol: step 7/7. In terms of biological role, catalyzes the oxidation of malonate semialdehyde (MSA) and methylmalonate semialdehyde (MMSA) into acetyl-CoA and propanoyl-CoA, respectively. Is involved in a myo-inositol catabolic pathway. Bicarbonate, and not CO2, is the end-product of the enzymatic reaction. The sequence is that of Malonate-semialdehyde dehydrogenase 1 from Bacillus thuringiensis (strain Al Hakam).